Consider the following 340-residue polypeptide: N-acetyl-gamma-glutamyl-phosphate reductase (340 aa).

Residue C146 is part of the active site.

The protein belongs to the NAGSA dehydrogenase family. Type 1 subfamily.

The protein resides in the cytoplasm. It carries out the reaction N-acetyl-L-glutamate 5-semialdehyde + phosphate + NADP(+) = N-acetyl-L-glutamyl 5-phosphate + NADPH + H(+). It functions in the pathway amino-acid biosynthesis; L-arginine biosynthesis; N(2)-acetyl-L-ornithine from L-glutamate: step 3/4. Its function is as follows. Catalyzes the NADPH-dependent reduction of N-acetyl-5-glutamyl phosphate to yield N-acetyl-L-glutamate 5-semialdehyde. This is N-acetyl-gamma-glutamyl-phosphate reductase from Streptococcus thermophilus (strain ATCC BAA-491 / LMD-9).